Consider the following 105-residue polypeptide: ATP synthase subunit c (105 aa).

3 consecutive transmembrane segments (helical) span residues 3–23 (FLAL…GGMD), 32–52 (SILG…IGMG), and 78–98 (VAMA…IIAI).

The protein belongs to the ATPase C chain family. F-type ATPases have 2 components, F(1) - the catalytic core - and F(0) - the membrane proton channel. F(1) has five subunits: alpha(3), beta(3), gamma(1), delta(1), epsilon(1). F(0) has three main subunits: a(1), b(2) and c(10-14). The alpha and beta chains form an alternating ring which encloses part of the gamma chain. F(1) is attached to F(0) by a central stalk formed by the gamma and epsilon chains, while a peripheral stalk is formed by the delta and b chains.

Its subcellular location is the cell inner membrane. In terms of biological role, f(1)F(0) ATP synthase produces ATP from ADP in the presence of a proton or sodium gradient. F-type ATPases consist of two structural domains, F(1) containing the extramembraneous catalytic core and F(0) containing the membrane proton channel, linked together by a central stalk and a peripheral stalk. During catalysis, ATP synthesis in the catalytic domain of F(1) is coupled via a rotary mechanism of the central stalk subunits to proton translocation. Functionally, key component of the F(0) channel; it plays a direct role in translocation across the membrane. A homomeric c-ring of between 10-14 subunits forms the central stalk rotor element with the F(1) delta and epsilon subunits. In Helicobacter acinonychis (strain Sheeba), this protein is ATP synthase subunit c.